Consider the following 343-residue polypeptide: GTPase Obg (343 aa).

The region spanning 1 to 159 is the Obg domain; it reads MKFVDSASIF…LQLDMELKLM (159 aa). The tract at residues 121–144 is disordered; sequence GHGGRGNQHFATSTNQAPRRSEPG. The segment covering 129–138 has biased composition (polar residues); that stretch reads HFATSTNQAP. In terms of domain architecture, OBG-type G spans 160–323; that stretch reads ADVGLVGFPN…LKDELWREVS (164 aa). Residues 166–173, 191–195, 213–216, 280–283, and 304–306 contribute to the GTP site; these read GFPNAGKS, FTTLV, DIPG, TKMD, and SSV. The Mg(2+) site is built by Ser-173 and Thr-193. The segment at 322–343 is disordered; sequence VSMRDRPEESSDPEGEGDGGTP. Positions 331-343 are enriched in acidic residues; it reads SSDPEGEGDGGTP.

This sequence belongs to the TRAFAC class OBG-HflX-like GTPase superfamily. OBG GTPase family. Monomer. Mg(2+) serves as cofactor.

The protein localises to the cytoplasm. Its function is as follows. An essential GTPase which binds GTP, GDP and possibly (p)ppGpp with moderate affinity, with high nucleotide exchange rates and a fairly low GTP hydrolysis rate. Plays a role in control of the cell cycle, stress response, ribosome biogenesis and in those bacteria that undergo differentiation, in morphogenesis control. The protein is GTPase Obg of Chlorobium luteolum (strain DSM 273 / BCRC 81028 / 2530) (Pelodictyon luteolum).